The primary structure comprises 837 residues: Putative outer membrane protein assembly factor TP_0326 (837 aa).

A signal peptide spans 1-21; that stretch reads MLKKASAFLIASCCVMSLAWA. The Periplasmic portion of the chain corresponds to 22-433; that stretch reads QANDNWYEGK…ILNVEEQSTA (412 aa). POTRA domains lie at 31–105, 106–182, 185–273, 276–354, and 357–430; these read KPIS…VKER, PSVK…IQEG, TVVS…VVEG, YRYG…VVER, and SHVE…VEEQ. The beta stranded transmembrane segment at 434-442 threads the bilayer; that stretch reads NVQFGVTFS. At 443 to 450 the chain is on the extracellular; loop L1 side; that stretch reads GVGEAGTF. The beta stranded transmembrane segment at 451–461 threads the bilayer; that stretch reads PLSLFCQWEEK. The Periplasmic portion of the chain corresponds to 462–468; it reads NFLGKGN. A beta stranded membrane pass occupies residues 469–476; that stretch reads EISVNATL. Residues 477–478 lie on the Extracellular; loop L2 side of the membrane; the sequence is GS. Residues 479–489 form a beta stranded membrane-spanning segment; the sequence is EAQSLKLGYVE. The Periplasmic segment spans residues 490-499; that stretch reads RWFLGSPLTV. Residues 500 to 520 form a beta stranded membrane-spanning segment; that stretch reads GFDFELTHKNLFVYRAGSYGN. Residues 521 to 530 lie on the Extracellular; loop L3 side of the membrane; sequence GLPHPYTSRE. The chain crosses the membrane as a beta stranded span at residues 531-543; that stretch reads QWASSPGLAESFR. Over 544-554 the chain is Periplasmic; it reads LKYSRFESAIG. A beta stranded transmembrane segment spans residues 555-568; that stretch reads AHTGYQWYPRYAVI. Residues 569–601 are Extracellular; loop L4-facing; the sequence is RVNGGVDFRVVKNFYDKDNNQPFDLTVKEQLNW. The chain crosses the membrane as a beta stranded span at residues 602–615; the sequence is TSINSFWTSVSFDG. The Periplasmic portion of the chain corresponds to 616–623; that stretch reads RDFAYDPS. A beta stranded transmembrane segment spans residues 624 to 636; that stretch reads SGWFLGQRCTFNG. Topologically, residues 637-644 are extracellular; loop L5; that stretch reads LVPFLEKE. A beta stranded transmembrane segment spans residues 645-658; that stretch reads HSFRSDTKAEFYVT. The Periplasmic portion of the chain corresponds to 659–667; that stretch reads LLNYPVSAV. Residues 668 to 682 form a beta stranded membrane-spanning segment; it reads WNLKFVLAFYTGVSV. Over 683–724 the chain is Extracellular; loop L6; it reads QTYYGRRKSENGKGNGVRSGALVIDGVLVGRGWSEDAKKNTG. A beta stranded membrane pass occupies residues 725 to 736; it reads DLLLHHWIEFRW. Residues 737-741 lie on the Periplasmic side of the membrane; the sequence is PLAHG. A beta stranded membrane pass occupies residues 742 to 756; sequence IVSFDFFFDAAMVYN. Residues 757–786 are Extracellular; loop L7-facing; it reads IESQSPNGSSSASSSSSSSSSSSRTTSSEG. Positions 761–785 are disordered; the sequence is SPNGSSSASSSSSSSSSSSRTTSSE. Residues 765-784 show a composition bias toward low complexity; that stretch reads SSSASSSSSSSSSSSRTTSS. A beta stranded membrane pass occupies residues 787 to 799; the sequence is LYKMSYGPGLRFT. The Periplasmic portion of the chain corresponds to 800 to 802; it reads LPQ. Residues 803 to 814 traverse the membrane as a beta stranded segment; the sequence is FPLKLAFANTFT. The Extracellular; loop L8 segment spans residues 815 to 824; it reads SPGGIPKTKK. The beta stranded transmembrane segment at 825 to 829 threads the bilayer; sequence NWNFV. Residues 830 to 837 are Periplasmic-facing; the sequence is LSFTVNNL.

It belongs to the BamA family. Part of 2 complexes of about 239 and 164 kDa.

Its subcellular location is the cell outer membrane. In terms of biological role, might be part of the outer membrane protein assembly complex, which is involved in assembly and insertion of beta-barrel proteins into the outer membrane. Its function is as follows. Both rabbit immune serum and rabbit antiserum specific for extracytoplasmic loop L4 promote bacteria internalization by rabbit peritoneal macrophages. Pools of human syphilitic sera from the USA and Columbia recognize both the N-terminal POTRA-containing and C-terminal beta-barrel domains as well as loop L4, showing this protein stimulates the immune system in both humans and rabbits. The chain is Putative outer membrane protein assembly factor TP_0326 (tp92) from Treponema pallidum (strain Nichols).